Here is a 400-residue protein sequence, read N- to C-terminus: Phosphoglycerate kinase (400 aa).

Residues 22-24, arginine 38, 61-64, arginine 119, and arginine 152 contribute to the substrate site; these read DFN and HLGR. ATP contacts are provided by residues lysine 205, glycine 296, glutamate 327, and 353–356; that span reads GGDT.

It belongs to the phosphoglycerate kinase family. Monomer.

It is found in the cytoplasm. It carries out the reaction (2R)-3-phosphoglycerate + ATP = (2R)-3-phospho-glyceroyl phosphate + ADP. The protein operates within carbohydrate degradation; glycolysis; pyruvate from D-glyceraldehyde 3-phosphate: step 2/5. The sequence is that of Phosphoglycerate kinase from Campylobacter jejuni subsp. jejuni serotype O:6 (strain 81116 / NCTC 11828).